We begin with the raw amino-acid sequence, 269 residues long: MAIPVVVVGCAGKMGREVVKAVHAAPDMAVVGAVDRSHIDEDAGELAGIGPIDVLVTDNLEITCAMVAQERAPGVMVDFTHPRGIYDRVRSAIAYGVRPVVGTTGLPPEHIEELAEFADKASTGCIVAPNFAIGMILLQQACLRAAEYFDHVEIIELHHNRKADAPSGTALATAQMIATTGKTFNVPEVSESELVAGARGGMTPGDIRIHSLRLPGLLAHQAVIFGGLGQSYTLRHDTTDRAAYMPGVLLAIRKVLGLKSLVYGLEKII.

NAD(+) is bound by residues 9–14, D35, 102–104, and 128–131; these read GCAGKM, GTT, and APNF. The active-site Proton donor/acceptor is H158. H159 is a binding site for (S)-2,3,4,5-tetrahydrodipicolinate. K162 (proton donor) is an active-site residue. (S)-2,3,4,5-tetrahydrodipicolinate is bound at residue 168-169; that stretch reads GT.

Belongs to the DapB family.

Its subcellular location is the cytoplasm. The enzyme catalyses (S)-2,3,4,5-tetrahydrodipicolinate + NAD(+) + H2O = (2S,4S)-4-hydroxy-2,3,4,5-tetrahydrodipicolinate + NADH + H(+). It carries out the reaction (S)-2,3,4,5-tetrahydrodipicolinate + NADP(+) + H2O = (2S,4S)-4-hydroxy-2,3,4,5-tetrahydrodipicolinate + NADPH + H(+). It participates in amino-acid biosynthesis; L-lysine biosynthesis via DAP pathway; (S)-tetrahydrodipicolinate from L-aspartate: step 4/4. Functionally, catalyzes the conversion of 4-hydroxy-tetrahydrodipicolinate (HTPA) to tetrahydrodipicolinate. The polypeptide is 4-hydroxy-tetrahydrodipicolinate reductase (Gloeobacter violaceus (strain ATCC 29082 / PCC 7421)).